The chain runs to 88 residues: Small ribosomal subunit protein uS15 (88 aa).

It belongs to the universal ribosomal protein uS15 family. As to quaternary structure, part of the 30S ribosomal subunit. Forms a bridge to the 50S subunit in the 70S ribosome, contacting the 23S rRNA.

Functionally, one of the primary rRNA binding proteins, it binds directly to 16S rRNA where it helps nucleate assembly of the platform of the 30S subunit by binding and bridging several RNA helices of the 16S rRNA. Forms an intersubunit bridge (bridge B4) with the 23S rRNA of the 50S subunit in the ribosome. The chain is Small ribosomal subunit protein uS15 from Mesoplasma florum (strain ATCC 33453 / NBRC 100688 / NCTC 11704 / L1) (Acholeplasma florum).